The chain runs to 188 residues: Putative lipoprotein LprB (188 aa).

Positions 1–27 (MRCDVRALALAARGLIELMIVIPMVAG) are cleaved as a signal peptide. Cys-28 carries the N-palmitoyl cysteine lipid modification. Cys-28 carries S-diacylglycerol cysteine lipidation.

It is found in the cell membrane. The sequence is that of Putative lipoprotein LprB (lprB) from Mycobacterium leprae (strain TN).